A 396-amino-acid polypeptide reads, in one-letter code: tRNA-specific 2-thiouridylase MnmA (396 aa).

ATP-binding positions include 11–18 (GLSGGVDS) and Met37. The segment at 97-99 (NPD) is interaction with target base in tRNA. The active-site Nucleophile is the Cys102. Cys102 and Cys225 form a disulfide bridge. Residue Gly126 participates in ATP binding. The tract at residues 175 to 177 (KDQ) is interaction with tRNA. Cys225 serves as the catalytic Cysteine persulfide intermediate. The interval 343–344 (RY) is interaction with tRNA.

The protein belongs to the MnmA/TRMU family.

The protein localises to the cytoplasm. It catalyses the reaction S-sulfanyl-L-cysteinyl-[protein] + uridine(34) in tRNA + AH2 + ATP = 2-thiouridine(34) in tRNA + L-cysteinyl-[protein] + A + AMP + diphosphate + H(+). Functionally, catalyzes the 2-thiolation of uridine at the wobble position (U34) of tRNA, leading to the formation of s(2)U34. This chain is tRNA-specific 2-thiouridylase MnmA, found in Methylibium petroleiphilum (strain ATCC BAA-1232 / LMG 22953 / PM1).